The following is a 313-amino-acid chain: Metaxin-3 (313 aa).

A disordered region spans residues 280–313 (EKMDDNLRSSPQHRPHRHEAKPSAPASDRNSTPA).

This sequence belongs to the metaxin family. Part of a large protein complex spanning both mitochondrial membranes termed the mitochondrial intermembrane space bridging (MIB) complex.

It is found in the mitochondrion. The protein localises to the mitochondrion outer membrane. Could function in transport of proteins into the mitochondrion. In Danio rerio (Zebrafish), this protein is Metaxin-3 (mtx3).